The chain runs to 357 residues: Peptide chain release factor 1 (357 aa).

An N5-methylglutamine modification is found at Q236.

The protein belongs to the prokaryotic/mitochondrial release factor family. Post-translationally, methylated by PrmC. Methylation increases the termination efficiency of RF1.

Its subcellular location is the cytoplasm. Functionally, peptide chain release factor 1 directs the termination of translation in response to the peptide chain termination codons UAG and UAA. This Mycobacterium avium (strain 104) protein is Peptide chain release factor 1.